The chain runs to 373 residues: 3 beta-hydroxysteroid dehydrogenase/Delta 5--&gt;4-isomerase type 1 (373 aa).

NADP(+) is bound by residues 10–15 (GAGGFL), Y155, and K159. The active-site Proton donor is K159. The helical transmembrane segment at 288–308 (LALMYWIGFLLEVVSFLLSPV) threads the bilayer.

Belongs to the 3-beta-HSD family. Adrenal glands, testes and ovaries.

Its subcellular location is the endoplasmic reticulum membrane. The protein resides in the mitochondrion membrane. The catalysed reaction is a 3beta-hydroxy-Delta(5)-steroid + NAD(+) = a 3-oxo-Delta(5)-steroid + NADH + H(+). It catalyses the reaction pregnenolone + NAD(+) = pregn-5-ene-3,20-dione + NADH + H(+). The enzyme catalyses 3beta-hydroxyandrost-5-en-17-one + NAD(+) = androst-5-ene-3,17-dione + NADH + H(+). It carries out the reaction androst-5-en-3beta,17beta-diol + NAD(+) = 17beta-hydroxy-androst-5-en-3-one + NADH + H(+). The catalysed reaction is a 3beta-hydroxysteroid + NADP(+) = a 3-oxosteroid + NADPH + H(+). It catalyses the reaction 5alpha-androstane-3beta,17beta-diol + NADP(+) = 17beta-hydroxy-5alpha-androstan-3-one + NADPH + H(+). The enzyme catalyses 3beta-hydroxy-5alpha-androstan-17-one + NADP(+) = 5alpha-androstan-3,17-dione + NADPH + H(+). It carries out the reaction a 3-oxo-Delta(5)-steroid = a 3-oxo-Delta(4)-steroid. The catalysed reaction is pregn-5-ene-3,20-dione = progesterone. It catalyses the reaction androst-5-ene-3,17-dione = androst-4-ene-3,17-dione. The enzyme catalyses 17beta-hydroxy-androst-5-en-3-one = testosterone. It carries out the reaction 5alpha-androstane-3beta,17beta-diol + NAD(+) = 17beta-hydroxy-5alpha-androstan-3-one + NADH + H(+). Its pathway is steroid hormone biosynthesis. The protein operates within steroid metabolism. In terms of biological role, a bifunctional enzyme responsible for the oxidation and isomerization of 3beta-hydroxy-Delta(5)-steroid precursors to 3-oxo-Delta(4)-steroids, an essential step in steroid hormone biosynthesis. Specifically catalyzes the conversion of pregnenolone to progesterone, 17alpha-hydroxypregnenolone to 17alpha-hydroxyprogesterone, dehydroepiandrosterone (DHEA) to 4-androstenedione and androstenediol to testosterone. Additionally, catalyzes the interconversion between 3beta-hydroxy and 3-oxo-5alpha-androstane steroids controlling the bioavalability of the active forms. Specifically converts dihydrotestosterone to its inactive form 5alpha-androstanediol, that does not bind androgen receptor/AR. Also converts androstanedione, a precursor of testosterone and estrone, to epiandrosterone. Expected to use NAD(+) as preferred electron donor for the 3beta-hydroxy-steroid dehydrogenase activity and NADPH for the 3-ketosteroid reductase activity. This Macaca mulatta (Rhesus macaque) protein is 3 beta-hydroxysteroid dehydrogenase/Delta 5--&gt;4-isomerase type 1 (HSD3B1).